A 603-amino-acid chain; its full sequence is MSGISELSGVTILYGSETGNAQDYALFLAKRLKYFGLKPSVVSLDHYPLKNLVTDTKYLIVICSTTGQGELPRNSKKFMKFILKKKLPTDLLNHIELTTFGIGDSSYPKFNYAIKKIHARLLQLGCSELCTRCEADEQTPEGVDGYYSEWETNLLEALKSKIHGIPLTYDETVLLPADNPVEVSSNESDVPTSNSPTELSLTRMGDGSTNLLLGSVKANKRITKEGHFQDVRHLIIEGENLSYIPGDTLALYPSNDNESVETLIQSQPHWIPIADKPLLIHGEIPFVEGGLIDKSKLTLRSLITHHLDIISIPRRSFFMTLAHFSDSTTEDGEREQEKLREFSKIEESEELYNYANRPRRSILETILEFQQNLTIPVEYILDLFPIIKPRLFSIASRPSPNSVELIVAVVVYKTILRRVRRGLCTKWIKSLQDNDRIVFSIHKSNLKFELPTTKYPPILMVSPGTGVAPMKSLIEHITSLGIQQHLYLFYGCRNKENDYLFGDLWASLKSQNKLSIYPCFSRDQDSKIKYVQHKIYEQHELVGDLILNQNAIVFICGSSGAMPREVRITLVEILMKFGKMKDTEADDYLMDMENGGRYLQETW.

The Flavodoxin-like domain maps to 10–155 (VTILYGSETG…YYSEWETNLL (146 aa)). Residues 16-21 (SETGNA), 64-67 (STTG), 102-111 (IGDSSYPKFN), and E137 each bind FMN. Residues 209–451 (TNLLLGSVKA…HKSNLKFELP (243 aa)) enclose the FAD-binding FR-type domain. FAD is bound by residues R359, 390 to 393 (RLFS), and 422 to 425 (GLCT). NADP(+) is bound by residues T465 and 521 to 522 (SR). Residue W603 coordinates FAD.

The protein belongs to the NADPH-dependent diflavin oxidoreductase NDOR1 family. In the N-terminal section; belongs to the flavodoxin family. It in the C-terminal section; belongs to the flavoprotein pyridine nucleotide cytochrome reductase family. As to quaternary structure, interacts with DRE2; as part of the cytosolic iron-sulfur (Fe-S) protein assembly (CIA) machinery. Requires FAD as cofactor. The cofactor is FMN.

It localises to the cytoplasm. The protein localises to the mitochondrion. The catalysed reaction is 2 oxidized [2Fe-2S]-[protein] + NADPH = 2 reduced [2Fe-2S]-[protein] + NADP(+) + H(+). NADPH-dependent reductase which is a central component of the cytosolic iron-sulfur (Fe-S) protein assembly (CIA) machinery. Transfers electrons from NADPH via its FAD and FMN prosthetic groups to the [2Fe-2S] cluster of DRE2, another key component of the CIA machinery. In turn, this reduced cluster provides electrons for assembly of cytosolic iron-sulfur cluster proteins. Positively controls H(2)O(2)-induced cell death. The protein is NADPH-dependent diflavin oxidoreductase 1 of Debaryomyces hansenii (strain ATCC 36239 / CBS 767 / BCRC 21394 / JCM 1990 / NBRC 0083 / IGC 2968) (Yeast).